A 76-amino-acid polypeptide reads, in one-letter code: Transcription modulator YdgT (76 aa).

This sequence belongs to the Hha/YmoA/Cnu family.

In terms of biological role, binds to H-NS and modifies the range of genes it silences; H-NS alone silences 'core' genes while the H-NS-Hha complex (and presumably also H-NS-YdgT) silences genes acquired by horizontal gene transfer. Plays a role silencing virulence factors in the absence of factors that induce pathogenicity. This is Transcription modulator YdgT (ydgT) from Salmonella typhimurium (strain SL1344).